We begin with the raw amino-acid sequence, 182 residues long: Ribosome-recycling factor (182 aa).

It belongs to the RRF family.

It localises to the cytoplasm. Responsible for the release of ribosomes from messenger RNA at the termination of protein biosynthesis. May increase the efficiency of translation by recycling ribosomes from one round of translation to another. In Synechococcus sp. (strain JA-2-3B'a(2-13)) (Cyanobacteria bacterium Yellowstone B-Prime), this protein is Ribosome-recycling factor.